Here is a 376-residue protein sequence, read N- to C-terminus: Phospho-N-acetylmuramoyl-pentapeptide-transferase (376 aa).

The next 10 membrane-spanning stretches (helical) occupy residues 28–48 (RTIM…PWFI), 76–96 (TMGG…WADL), 100–120 (FVLA…LDDF), 135–155 (YKLI…FLLA), 179–199 (YPIE…VVAT), 211–231 (GLAI…AYIV), 252–272 (AGEL…FLWY), 279–299 (VFMG…LAVF), 307–327 (IILG…VLSF), and 353–373 (KIIV…LASM).

Belongs to the glycosyltransferase 4 family. MraY subfamily. The cofactor is Mg(2+).

It is found in the cell inner membrane. The enzyme catalyses UDP-N-acetyl-alpha-D-muramoyl-L-alanyl-gamma-D-glutamyl-meso-2,6-diaminopimeloyl-D-alanyl-D-alanine + di-trans,octa-cis-undecaprenyl phosphate = di-trans,octa-cis-undecaprenyl diphospho-N-acetyl-alpha-D-muramoyl-L-alanyl-D-glutamyl-meso-2,6-diaminopimeloyl-D-alanyl-D-alanine + UMP. Its pathway is cell wall biogenesis; peptidoglycan biosynthesis. Its function is as follows. Catalyzes the initial step of the lipid cycle reactions in the biosynthesis of the cell wall peptidoglycan: transfers peptidoglycan precursor phospho-MurNAc-pentapeptide from UDP-MurNAc-pentapeptide onto the lipid carrier undecaprenyl phosphate, yielding undecaprenyl-pyrophosphoryl-MurNAc-pentapeptide, known as lipid I. The protein is Phospho-N-acetylmuramoyl-pentapeptide-transferase of Sorangium cellulosum (strain So ce56) (Polyangium cellulosum (strain So ce56)).